A 311-amino-acid polypeptide reads, in one-letter code: Methionyl-tRNA formyltransferase (311 aa).

Position 110–113 (110–113 (SLLP)) interacts with (6S)-5,6,7,8-tetrahydrofolate.

Belongs to the Fmt family.

It catalyses the reaction L-methionyl-tRNA(fMet) + (6R)-10-formyltetrahydrofolate = N-formyl-L-methionyl-tRNA(fMet) + (6S)-5,6,7,8-tetrahydrofolate + H(+). Its function is as follows. Attaches a formyl group to the free amino group of methionyl-tRNA(fMet). The formyl group appears to play a dual role in the initiator identity of N-formylmethionyl-tRNA by promoting its recognition by IF2 and preventing the misappropriation of this tRNA by the elongation apparatus. In Streptococcus pneumoniae (strain P1031), this protein is Methionyl-tRNA formyltransferase.